We begin with the raw amino-acid sequence, 84 residues long: Small ribosomal subunit protein bS20 (84 aa).

This sequence belongs to the bacterial ribosomal protein bS20 family.

In terms of biological role, binds directly to 16S ribosomal RNA. This chain is Small ribosomal subunit protein bS20, found in Limosilactobacillus reuteri (strain DSM 20016) (Lactobacillus reuteri).